The sequence spans 246 residues: Pyrroloquinoline-quinone synthase (246 aa).

Belongs to the PqqC family.

The catalysed reaction is 6-(2-amino-2-carboxyethyl)-7,8-dioxo-1,2,3,4,7,8-hexahydroquinoline-2,4-dicarboxylate + 3 O2 = pyrroloquinoline quinone + 2 H2O2 + 2 H2O + H(+). It participates in cofactor biosynthesis; pyrroloquinoline quinone biosynthesis. Ring cyclization and eight-electron oxidation of 3a-(2-amino-2-carboxyethyl)-4,5-dioxo-4,5,6,7,8,9-hexahydroquinoline-7,9-dicarboxylic-acid to PQQ. The chain is Pyrroloquinoline-quinone synthase from Acidiphilium cryptum (strain JF-5).